Consider the following 308-residue polypeptide: Eukaryotic translation initiation factor 3 subunit G-A (308 aa).

Disordered regions lie at residues 1 to 35 (MPTGDYDSKPSWADQVEEEGIDAEPLSPQIRKPDP) and 177 to 226 (TGDK…ADDN). Over residues 185 to 194 (GAEPEPAQAP) the composition is skewed to low complexity. Residues 209–226 (GGSRRGESMQPNRRADDN) show a composition bias toward basic and acidic residues. The 79-residue stretch at 227–305 (ATIRVTNLSE…LILNVEWAKP (79 aa)) folds into the RRM domain.

This sequence belongs to the eIF-3 subunit G family. In terms of assembly, component of the eukaryotic translation initiation factor 3 (eIF-3) complex, which is composed of 13 subunits: eif3a, eif3b, eif3c, eif3d, eif3e, eif3f, eif3g, eif3h, eif3i, eif3j, eif3k, eif3l and eif3m.

Its subcellular location is the cytoplasm. In terms of biological role, RNA-binding component of the eukaryotic translation initiation factor 3 (eIF-3) complex, which is involved in protein synthesis of a specialized repertoire of mRNAs and, together with other initiation factors, stimulates binding of mRNA and methionyl-tRNAi to the 40S ribosome. The eIF-3 complex specifically targets and initiates translation of a subset of mRNAs involved in cell proliferation. This subunit can bind 18S rRNA. The polypeptide is Eukaryotic translation initiation factor 3 subunit G-A (eif3g-a) (Xenopus laevis (African clawed frog)).